A 1263-amino-acid polypeptide reads, in one-letter code: MSDYESGSDIDNYYEADEFDDFIEYSDNEVEQEKSKPTPGQIEVEEIEEPEEDRIRTLTTTLKPNETQAQKLLKAHISVLVSALGGPDHTSDIQPPPYKLGHDALACLKDIKRWIRAVDEKKNNYEVALACAESGLVTNDLIVIMCQWEDKMQKKEIIKNKTTTEKTMLACLELLVLLTWPVEFGKDLSESQKLLYSEIKKVHVSYKKQILMFNNGQLLKAAIRLVLPTIAKSRIDREPRDNQILKLVLYLIRNLLAIEPANLSISNKSRKGASVTASDLPLGVTQDDISINNVLSVFKKNKVLMLLLTISGSLGTEFDRDMFGEICLESIYLIIKGLSASEVLVKKNLGSTPVAAPSQNTVPDAINASQPLQPVTTTVGMQLQDLLATESKKKKIQTQNIASRHGRFGSLLSIRSADSNSFVVSGQEALINTDSSLAKLDKSKKWKDRTYFKYDSDEYVNTSTPVYLNLTGQDILYNFVEQFLSGGCFNNLIECMGSRLTSQTDLNMVDELTLASYFFTISWFLSYQRERIGLDSENKELNYGSVGAALSEVNFILIIGYFRDSFSVKKWNSLHVAMICFKELLQISNSVFGKEITNQTGEGDEISQHEIDRELAEGIIRKLFSFNDFLSIIVQIPQTAAKHSPDYLRVSVSVVHILLKAFETFANEDVHLYIQSKRKQSKRNRKRVNNLDKSTEDRLRDVIYASDEELDQSSAKEITQERKLDFKKTEARFFHQAIVSTYINYLSRYEDLSNQEIKTCLSYFHRLFVVRKDFTGLYRLDFMQLLQKLRNYLQRGSSLRLQVEEFIYYFMKKFKTAFERFPMPIEVLFPRFEDNECKVYLATGEVYEKEETTSTSRSPRLAKDLEFVRDFGLDDQIKILVSQLHVQEKQSLLKWLIQELERIINDRILNSDSIAELNASNQQRRLFINNGYLRFLLRIIGFDLPYTMEEVPELATTVDMEHLTKVTELIKKWDSSQPVIFEDDKVPSYFVRTREAGYDEDQYNENDQEYDFNDDSIAFETEANPNSNRNHVSELDHLEELERQLSSNGSRVNSKERNGTKGKARKKSKEKKRPEPKKVRGLKRRRIPKDLLDDDDSQHVVKSAEFVHDSDDESDDEKDKAFFEREEKMRNLLNDMGGIATSEQLKEIQKVWKNLETGGNNKVASTVAKAVKEVGLFVEESDNDDEVEEESRNSAPVNEEADRTIFESGEVDTQQDLSDNTSNTSDMESETETTKRSFVEDPEEISHVQPKRKRLVISDDEEE.

Disordered regions lie at residues 1042-1098 (ERQL…DDSQ) and 1178-1263 (VEES…DEEE). Residues 1060-1071 (TKGKARKKSKEK) are compositionally biased toward basic residues. Residues 1179–1189 (EESDNDDEVEE) show a composition bias toward acidic residues. Residues 1211-1226 (VDTQQDLSDNTSNTSD) are compositionally biased toward polar residues.

This sequence belongs to the timeless family. As to quaternary structure, component of the fork protection complex (FPC) consisting of TOF1 and CSM3.

It is found in the nucleus. Its function is as follows. Forms a fork protection complex (FPC) with CSM3 and which is required for chromosome segregation during meiosis and DNA damage repair. FPC coordinates leading and lagging strand synthesis and moves with the replication fork. FPC stabilizes replication forks in a configuration that is recognized by replication checkpoint sensors. This is Topoisomerase 1-associated factor 1 (YBL053) from Candida albicans (strain SC5314 / ATCC MYA-2876) (Yeast).